We begin with the raw amino-acid sequence, 146 residues long: Gastrin-releasing peptide (146 aa).

An N-terminal signal peptide occupies residues M1–A23. At M50 the chain carries Methionine amide. The propeptide occupies S54–N146. Residues S95–N146 are disordered. Residues D112–V128 are compositionally biased toward basic and acidic residues.

Belongs to the bombesin/neuromedin-B/ranatensin family.

It localises to the secreted. Its subcellular location is the cytoplasmic vesicle. The protein localises to the secretory vesicle lumen. The protein resides in the cell projection. It is found in the neuron projection. In terms of biological role, stimulates the release of gastrin and other gastrointestinal hormones. Contributes to the perception of prurient stimuli and to the transmission of itch signals in the spinal cord that promote scratching behavior. Contributes primarily to nonhistaminergic itch sensation. In one study, shown to act in the amygdala as part of an inhibitory network which inhibits memory specifically related to learned fear. In another study, shown to act on vasoactive intestinal peptide (VIP)-expressing cells in the auditory cortex, most likely via extrasynaptic diffusion from local and long-range sources, to mediate disinhibition of glutamatergic cells via VIP cell-specific GRPR signaling which leads to enhanced auditory fear memories. Contributes to the regulation of food intake. Inhibits voltage-gated sodium channels but enhances voltage-gated potassium channels in hippocampal neurons. Induces sighing by acting directly on the pre-Botzinger complex, a cluster of several thousand neurons in the ventrolateral medulla responsible for inspiration during respiratory activity. Its function is as follows. Induces an itch response through activation of receptors present on mast cells, triggering mast cell degranulation. The sequence is that of Gastrin-releasing peptide (GRP) from Sus scrofa (Pig).